Here is a 419-residue protein sequence, read N- to C-terminus: L-rhamnose isomerase (419 aa).

Mn(2+) is bound by residues histidine 262, aspartate 294, and aspartate 296.

The protein belongs to the rhamnose isomerase family. As to quaternary structure, homotetramer. Mn(2+) is required as a cofactor.

Its subcellular location is the cytoplasm. It carries out the reaction L-rhamnopyranose = L-rhamnulose. Its pathway is carbohydrate degradation; L-rhamnose degradation; glycerone phosphate from L-rhamnose: step 1/3. Functionally, catalyzes the interconversion of L-rhamnose and L-rhamnulose. The sequence is that of L-rhamnose isomerase from Salmonella gallinarum (strain 287/91 / NCTC 13346).